The chain runs to 428 residues: Putative FBD-associated F-box protein At5g56390 (428 aa).

In terms of domain architecture, F-box spans 2–50 (DKISQLHDELLLGILSLLPNAKDVVATMVLSKRWRYLWMMVPSLVYDDS). The FBD domain occupies 344–394 (CWNETSLVPEYLLPSLETFEWVDYEGTKTEKQVVAFILRIASCLKQATIVS).

In Arabidopsis thaliana (Mouse-ear cress), this protein is Putative FBD-associated F-box protein At5g56390.